A 185-amino-acid polypeptide reads, in one-letter code: Kunitz-type serine protease inhibitor DrTI (185 aa).

2 cysteine pairs are disulfide-bonded: C44/C89 and C139/C147.

Belongs to the protease inhibitor I3 (leguminous Kunitz-type inhibitor) family.

The protein resides in the secreted. Functionally, inhibits bovine trypsin and human plasma kallikrein. This is Kunitz-type serine protease inhibitor DrTI from Delonix regia (Royal poinciana).